Here is a 1505-residue protein sequence, read N- to C-terminus: Myosin-6 (1505 aa).

Positions 8–57 (SVGSFVWVEDPDEAWIDGEVVQVNGDEIKVLCTSGKHVVTKISNAYPKDV) constitute a Myosin N-terminal SH3-like domain. In terms of domain architecture, Myosin motor spans 62-731 (SGVDDMTRLA…QMADLDTRRT (670 aa)). Residues 156–163 (GESGAGKT) and 209–217 (NNNSSRFGK) each bind ATP. Actin-binding stretches follow at residues 495–529 (LIEK…YQTF), 531–554 (THKR…AGDV), 589–612 (FPPM…KQQL), and 612–634 (LVSL…KPNN). IQ domains are found at residues 734 to 763 (LGRS…SAKQ), 757 to 786 (LRNS…EAAA), 782 to 811 (REAA…AAVS), 805 to 834 (LYSA…TKAA), 830 to 859 (QTKA…AAIT), and 853 to 882 (LKKA…AARE). A coiled-coil region spans residues 883-1048 (TGALQAAKNK…AEKKIMHQQT (166 aa)). The Dilute domain maps to 1148–1452 (DRLIQMIGSA…ISSMRTLMTE (305 aa)).

Belongs to the TRAFAC class myosin-kinesin ATPase superfamily. Myosin family. Plant myosin class XI subfamily. In terms of assembly, homodimer. Interacts with RABC2A and RABD1. In terms of tissue distribution, expressed in flowers, leaves, roots and stems.

It localises to the cytoplasm. Functionally, myosin heavy chain that is required for the cell cycle-regulated transport of various organelles and proteins for their segregation. Functions by binding with its tail domain to receptor proteins on organelles and exerting force with its N-terminal motor domain against actin filaments, thereby transporting its cargo along polarized actin cables. Involved in the tip growth of root hair cells. Plays a major role in trafficking of Golgi stacks, mitochondria and peroxisomes during root hair development. Targets the peroxisome through an interaction with RABC2A. Required for development of pavement cells, trichomes, and stigmatic papillae. The chain is Myosin-6 (XI-2) from Arabidopsis thaliana (Mouse-ear cress).